We begin with the raw amino-acid sequence, 430 residues long: UDP-N-acetylglucosamine 1-carboxyvinyltransferase (430 aa).

A phosphoenolpyruvate-binding site is contributed by 22-23 (KN). Position 102 (Arg102) interacts with UDP-N-acetyl-alpha-D-glucosamine. The active-site Proton donor is Cys126. Position 126 is a 2-(S-cysteinyl)pyruvic acid O-phosphothioketal (Cys126). UDP-N-acetyl-alpha-D-glucosamine is bound by residues 131–135 (RPVDL), 172–175 (KVSV), Asp317, and Ile339.

Belongs to the EPSP synthase family. MurA subfamily.

It localises to the cytoplasm. The catalysed reaction is phosphoenolpyruvate + UDP-N-acetyl-alpha-D-glucosamine = UDP-N-acetyl-3-O-(1-carboxyvinyl)-alpha-D-glucosamine + phosphate. Its pathway is cell wall biogenesis; peptidoglycan biosynthesis. In terms of biological role, cell wall formation. Adds enolpyruvyl to UDP-N-acetylglucosamine. The protein is UDP-N-acetylglucosamine 1-carboxyvinyltransferase of Rhizobium etli (strain CIAT 652).